Reading from the N-terminus, the 270-residue chain is Urease accessory protein UreD (270 aa).

It belongs to the UreD family. As to quaternary structure, ureD, UreF and UreG form a complex that acts as a GTP-hydrolysis-dependent molecular chaperone, activating the urease apoprotein by helping to assemble the nickel containing metallocenter of UreC. The UreE protein probably delivers the nickel.

It is found in the cytoplasm. Required for maturation of urease via the functional incorporation of the urease nickel metallocenter. The chain is Urease accessory protein UreD from Beijerinckia indica subsp. indica (strain ATCC 9039 / DSM 1715 / NCIMB 8712).